Consider the following 700-residue polypeptide: MVAQYTVPVGKAANEHETAPRRNYQCREKPLVRPPNTKCSTVYEFVLECFQKNKNSNAMGWRDVKEIHEESKSVMKKVDGKETSVEKKWMYYELSHYHYNSFDQLTDIMHEIGRGLVKIGLKPNDDDKLHLYAATSHKWMKMFLGAQSQGIPVVTAYDTLGEKGLIHSLVQTGSKAIFTDNSLLPSLIKPVQAAQDVKYIIHFDSISSEDRRQSGKIYQSAHDAINRIKEVRPDIKTFSFDDILKLGKESCNEIDVHPPGKDDLCCIMYTSGSTGEPKGVVLKHSNVVAGVGGASLNVLKFVGNTDRVICFLPLAHIFELVFELLSFYWGACIGYATVKTLTSSSVRNCQGDLQEFKPTIMVGVAAVWETVRKGILNQIDNLPFLTKKIFWTAYNTKLNMQRLHIPGGGALGNLVFKKIRTATGGQLRYLLNGGSPISRDAQEFITNLICPMLIGYGLTETCASTTILDPANFELGVAGDLTGCVTVKLVDVEELGYFAKNNQGEVWITGANVTPEYYKNEEETSQALTSDGWFKTGDIGEWEANGHLKIIDRKKNLVKTMNGEYIALEKLESVYRSNEYVANICVYADQSKTKPVGIIVPNHAPLTKLAKKLGIMEQKDSSINIENYLEDAKLIKAVYSDLLKTGKDQGLVGIELLAGIVFFDGEWTPQNGFVTSAQKLKRKDILNAVKDKVDAVYSSS.

Residues 1–21 (MVAQYTVPVGKAANEHETAPR) are disordered. K189 is covalently cross-linked (Glycyl lysine isopeptide (Lys-Gly) (interchain with G-Cter in ubiquitin)). 269–280 (YTSGSTGEPKGV) provides a ligand contact to ATP. An FACS motif is present at residues 531 to 580 (DGWFKTGDIGEWEANGHLKIIDRKKNLVKTMNGEYIALEKLESVYRSNEY).

It belongs to the ATP-dependent AMP-binding enzyme family. As to quaternary structure, interacts with FAT1. Mg(2+) is required as a cofactor.

Its subcellular location is the lipid droplet. The protein resides in the cell membrane. The catalysed reaction is a long-chain fatty acid + ATP + CoA = a long-chain fatty acyl-CoA + AMP + diphosphate. The enzyme catalyses (9Z)-octadecenoate + ATP + CoA = (9Z)-octadecenoyl-CoA + AMP + diphosphate. It carries out the reaction hexadecanoate + ATP + CoA = hexadecanoyl-CoA + AMP + diphosphate. It catalyses the reaction (9Z)-hexadecenoate + ATP + CoA = (9Z)-hexadecenoyl-CoA + AMP + diphosphate. The catalysed reaction is tetradecanoate + ATP + CoA = tetradecanoyl-CoA + AMP + diphosphate. The enzyme catalyses (9Z)-tetradecenoate + ATP + CoA = (9Z)-tetradecenoyl-CoA + AMP + diphosphate. It carries out the reaction (9Z,12Z)-octadecadienoate + ATP + CoA = (9Z,12Z)-octadecadienoyl-CoA + AMP + diphosphate. It catalyses the reaction dodecanoate + ATP + CoA = dodecanoyl-CoA + AMP + diphosphate. The catalysed reaction is pentadecanoate + ATP + CoA = pentadecanoyl-CoA + AMP + diphosphate. The enzyme catalyses undecanoate + ATP + CoA = undecanoyl-CoA + AMP + diphosphate. It carries out the reaction heptadecanoate + ATP + CoA = heptadecanoyl-CoA + AMP + diphosphate. It catalyses the reaction octadecanoate + ATP + CoA = octadecanoyl-CoA + AMP + diphosphate. Functionally, activates long-chain fatty acids (LCFA) by esterification of the fatty acids into metabolically active CoA-thioesters for subsequent degradation or incorporation into phospholipids. Also facilitates the transport of LCFAs into the cell, either by active transport or by decreasing the intracellular LCFA concentration. It may supplement intracellular myristoyl-CoA pools from exogenous myristate. Preferentially acts on C12:0-C16:0 fatty acids with myristic and pentadecanic acid (C15:0) having the highest activities. Also involved in long-chain base (LCB) uptake of sphingolipids. In contrast ot LCFA uptake, LCB uptake does not require ATP, suggesting that the enzyme is directly involved in active LCB uptake. Involved in the sphingolipid-to-glycerolipid metabolic pathway, converting the sphingolipid metabolite hexadecenoic acid to hexadecenoyl-CoA, which is then further converted to glycerolipids. This Saccharomyces cerevisiae (strain ATCC 204508 / S288c) (Baker's yeast) protein is Long-chain-fatty-acid--CoA ligase 1 (FAA1).